Here is a 97-residue protein sequence, read N- to C-terminus: Putative membrane protein insertion efficiency factor (97 aa).

It belongs to the UPF0161 family.

It localises to the cell membrane. Functionally, could be involved in insertion of integral membrane proteins into the membrane. This Lactobacillus helveticus (strain DPC 4571) protein is Putative membrane protein insertion efficiency factor.